The sequence spans 215 residues: Cytochrome b6 (215 aa).

The chain crosses the membrane as a helical span at residues 32-52; sequence IFYCLGGITLTCFLVQVATGF. Cysteine 35 is a heme c binding site. Heme b-binding residues include histidine 86 and histidine 100. Helical transmembrane passes span 90–110, 116–136, and 186–206; these read ASMMVLMMILHVFRVYLTGGF, LTWVTGVVLAVLTASFGVTGY, and LHTFVLPLLTAVFMLMHFLMI. Residues histidine 187 and histidine 202 each contribute to the heme b site.

It belongs to the cytochrome b family. PetB subfamily. The 4 large subunits of the cytochrome b6-f complex are cytochrome b6, subunit IV (17 kDa polypeptide, PetD), cytochrome f and the Rieske protein, while the 4 small subunits are PetG, PetL, PetM and PetN. The complex functions as a dimer. Heme b is required as a cofactor. The cofactor is heme c.

It is found in the plastid. The protein localises to the chloroplast thylakoid membrane. Functionally, component of the cytochrome b6-f complex, which mediates electron transfer between photosystem II (PSII) and photosystem I (PSI), cyclic electron flow around PSI, and state transitions. The sequence is that of Cytochrome b6 from Oenothera elata subsp. hookeri (Hooker's evening primrose).